Consider the following 286-residue polypeptide: Lipoyl synthase (286 aa).

7 residues coordinate [4Fe-4S] cluster: Cys-34, Cys-39, Cys-45, Cys-60, Cys-64, Cys-67, and Ser-271. The 215-residue stretch at 46–260 (WESGTATFMI…EESAYSIGFS (215 aa)) folds into the Radical SAM core domain.

Belongs to the radical SAM superfamily. Lipoyl synthase family. The cofactor is [4Fe-4S] cluster.

It localises to the cytoplasm. It carries out the reaction [[Fe-S] cluster scaffold protein carrying a second [4Fe-4S](2+) cluster] + N(6)-octanoyl-L-lysyl-[protein] + 2 oxidized [2Fe-2S]-[ferredoxin] + 2 S-adenosyl-L-methionine + 4 H(+) = [[Fe-S] cluster scaffold protein] + N(6)-[(R)-dihydrolipoyl]-L-lysyl-[protein] + 4 Fe(3+) + 2 hydrogen sulfide + 2 5'-deoxyadenosine + 2 L-methionine + 2 reduced [2Fe-2S]-[ferredoxin]. It functions in the pathway protein modification; protein lipoylation via endogenous pathway; protein N(6)-(lipoyl)lysine from octanoyl-[acyl-carrier-protein]: step 2/2. Catalyzes the radical-mediated insertion of two sulfur atoms into the C-6 and C-8 positions of the octanoyl moiety bound to the lipoyl domains of lipoate-dependent enzymes, thereby converting the octanoylated domains into lipoylated derivatives. This Picrophilus torridus (strain ATCC 700027 / DSM 9790 / JCM 10055 / NBRC 100828 / KAW 2/3) protein is Lipoyl synthase.